The primary structure comprises 353 residues: Photosystem II protein D1 (353 aa).

Thr2 carries the N-acetylthreonine modification. Phosphothreonine is present on Thr2. 3 helical membrane-spanning segments follow: residues 29 to 46, 118 to 133, and 142 to 156; these read YIGW…TATS, HFLL…EWEL, and WIAV…AATA. His118 lines the chlorophyll a pocket. Tyr126 contributes to the pheophytin a binding site. [CaMn4O5] cluster is bound by residues Asp170 and Glu189. A helical transmembrane segment spans residues 197–218; the sequence is FHMLGVAGVFGGSLFSAMHGSL. A chlorophyll a-binding site is contributed by His198. A quinone-binding positions include His215 and 264–265; that span reads SF. His215 provides a ligand contact to Fe cation. Residue His272 coordinates Fe cation. Residues 274-288 form a helical membrane-spanning segment; that stretch reads LLAAWPVVGIWFTAL. [CaMn4O5] cluster is bound by residues His332, Glu333, Asp342, and Ala344. Positions 345–353 are excised as a propeptide; that stretch reads AVEAPSTNG.

Belongs to the reaction center PufL/M/PsbA/D family. As to quaternary structure, PSII is composed of 1 copy each of membrane proteins PsbA, PsbB, PsbC, PsbD, PsbE, PsbF, PsbH, PsbI, PsbJ, PsbK, PsbL, PsbM, PsbT, PsbX, PsbY, PsbZ, Psb30/Ycf12, at least 3 peripheral proteins of the oxygen-evolving complex and a large number of cofactors. It forms dimeric complexes. It depends on The D1/D2 heterodimer binds P680, chlorophylls that are the primary electron donor of PSII, and subsequent electron acceptors. It shares a non-heme iron and each subunit binds pheophytin, quinone, additional chlorophylls, carotenoids and lipids. D1 provides most of the ligands for the Mn4-Ca-O5 cluster of the oxygen-evolving complex (OEC). There is also a Cl(-1) ion associated with D1 and D2, which is required for oxygen evolution. The PSII complex binds additional chlorophylls, carotenoids and specific lipids. as a cofactor. Post-translationally, tyr-161 forms a radical intermediate that is referred to as redox-active TyrZ, YZ or Y-Z. In terms of processing, C-terminally processed by CTPA; processing is essential to allow assembly of the oxygen-evolving complex and thus photosynthetic growth.

The protein resides in the plastid. The protein localises to the chloroplast thylakoid membrane. It carries out the reaction 2 a plastoquinone + 4 hnu + 2 H2O = 2 a plastoquinol + O2. Photosystem II (PSII) is a light-driven water:plastoquinone oxidoreductase that uses light energy to abstract electrons from H(2)O, generating O(2) and a proton gradient subsequently used for ATP formation. It consists of a core antenna complex that captures photons, and an electron transfer chain that converts photonic excitation into a charge separation. The D1/D2 (PsbA/PsbD) reaction center heterodimer binds P680, the primary electron donor of PSII as well as several subsequent electron acceptors. The chain is Photosystem II protein D1 from Dioscorea elephantipes (Elephant's foot yam).